Reading from the N-terminus, the 160-residue chain is Cytochrome b6-f complex subunit 4 (160 aa).

3 helical membrane-spanning segments follow: residues 36-56 (LLYIFPVVIVGTIALCVGLAV), 95-115 (LLGIVAMASIPLGLMLVPFIE), and 131-151 (AVFLFGTAVTLWLGIGATLPI).

Belongs to the cytochrome b family. PetD subfamily. In terms of assembly, the 4 large subunits of the cytochrome b6-f complex are cytochrome b6, subunit IV (17 kDa polypeptide, PetD), cytochrome f and the Rieske protein, while the 4 small subunits are PetG, PetL, PetM and PetN. The complex functions as a dimer.

The protein resides in the cellular thylakoid membrane. Its function is as follows. Component of the cytochrome b6-f complex, which mediates electron transfer between photosystem II (PSII) and photosystem I (PSI), cyclic electron flow around PSI, and state transitions. The protein is Cytochrome b6-f complex subunit 4 of Trichodesmium erythraeum (strain IMS101).